Reading from the N-terminus, the 439-residue chain is Lipase 1 (439 aa).

The N-terminal stretch at Met-1–Gly-24 is a signal peptide. A disordered region spans residues Gly-28 to Ile-60. A compositionally biased stretch (acidic residues) spans Gly-29–Pro-51. Asn-124 and Asn-151 each carry an N-linked (GlcNAc...) asparagine glycan. The Charge relay system role is filled by Ser-197. N-linked (GlcNAc...) asparagine glycosylation is found at Asn-346 and Asn-379. The Charge relay system role is filled by His-393. The N-linked (GlcNAc...) asparagine glycan is linked to Asn-426.

This sequence belongs to the AB hydrolase superfamily. Lipase family. In 14 hours embryos expression is seen in the foregut/midgut boundary.

The protein localises to the secreted. Its function is as follows. Could be a digestive enzyme. The sequence is that of Lipase 1 (Lip1) from Drosophila melanogaster (Fruit fly).